A 287-amino-acid polypeptide reads, in one-letter code: Probable endoribonuclease YicC (287 aa).

The protein belongs to the YicC/YloC family. A divalent metal cation is required as a cofactor.

Functionally, probably a ssRNA endonuclease. Might contribute to small RNA (sRNA) regulation. This chain is Probable endoribonuclease YicC, found in Haemophilus influenzae (strain ATCC 51907 / DSM 11121 / KW20 / Rd).